Reading from the N-terminus, the 272-residue chain is Shikimate dehydrogenase (NADP(+)) (272 aa).

Shikimate-binding positions include 14 to 16 (SKS) and T61. Catalysis depends on K65, which acts as the Proton acceptor. Residue E77 participates in NADP(+) binding. Shikimate is bound by residues N86 and D102. NADP(+)-binding positions include 126 to 130 (GAGGA), 149 to 154 (NRTVSR), and M213. Y215 contributes to the shikimate binding site. An NADP(+)-binding site is contributed by G237.

It belongs to the shikimate dehydrogenase family. Homodimer.

It catalyses the reaction shikimate + NADP(+) = 3-dehydroshikimate + NADPH + H(+). It participates in metabolic intermediate biosynthesis; chorismate biosynthesis; chorismate from D-erythrose 4-phosphate and phosphoenolpyruvate: step 4/7. Its function is as follows. Involved in the biosynthesis of the chorismate, which leads to the biosynthesis of aromatic amino acids. Catalyzes the reversible NADPH linked reduction of 3-dehydroshikimate (DHSA) to yield shikimate (SA). The polypeptide is Shikimate dehydrogenase (NADP(+)) (Shigella boydii serotype 18 (strain CDC 3083-94 / BS512)).